The chain runs to 541 residues: Ankyrin repeat domain-containing protein 13C (541 aa).

Basic and acidic residues predominate over residues 1–20; sequence MTGEKIRSLRRDHKPSKEEG. A disordered region spans residues 1–27; it reads MTGEKIRSLRRDHKPSKEEGDLLEPGD. ANK repeat units lie at residues 111–142, 143–172, and 176–205; these read PAHY…QKDN, HGNT…PVKV, and QGWS…QQSR. S411 carries the phosphoserine modification.

It is found in the endoplasmic reticulum membrane. Its function is as follows. Acts as a molecular chaperone for G protein-coupled receptors, regulating their biogenesis and exit from the ER. This Homo sapiens (Human) protein is Ankyrin repeat domain-containing protein 13C (ANKRD13C).